Reading from the N-terminus, the 515-residue chain is Glucose-6-phosphate 1-dehydrogenase (515 aa).

Position 2 is an N-acetylalanine (alanine 2). Serine 8 is modified (phosphoserine). Threonine 10 bears the Phosphothreonine mark. NADP(+) contacts are provided by residues 38–45 (GASGDLAK) and arginine 72. The residue at position 89 (lysine 89) is an N6-acetyllysine. Residues tyrosine 147 and lysine 171 each contribute to the NADP(+) site. Residues lysine 171, 201–205 (HYLGK), glutamate 239, and aspartate 258 each bind D-glucose 6-phosphate. Lysine 171 is subject to N6-(2-hydroxyisobutyryl)lysine; alternate. Position 171 is an N6-acetyllysine; alternate (lysine 171). Histidine 263 serves as the catalytic Proton acceptor. Arginine 357 serves as a coordination point for NADP(+). Residues lysine 360 and arginine 365 each contribute to the D-glucose 6-phosphate site. NADP(+) contacts are provided by lysine 366, arginine 370, and arginine 393. Residue glutamine 395 coordinates D-glucose 6-phosphate. Residues 401–403 (YTK) and 421–423 (DLT) each bind NADP(+). Lysine 403 carries the N6-acetyllysine modification. The residue at position 432 (lysine 432) is an N6-acetyllysine. Arginine 487 lines the NADP(+) pocket. Lysine 497 is subject to N6-acetyllysine. NADP(+) is bound by residues tyrosine 503 and tryptophan 509. The residue at position 503 (tyrosine 503) is a Phosphotyrosine.

Belongs to the glucose-6-phosphate dehydrogenase family. Homotetramer; dimer of dimers. Interacts with SIRT2; the interaction is enhanced by H(2)O(2) treatment. Forms a ternary complex with ALDOB and TP53; this interaction is direct. ALDOB stabilizes the complex inhibiting G6PD activity and keeping oxidative pentose phosphate metabolism in check. Acetylated by ELP3 at Lys-403; acetylation inhibits its homodimerization and enzyme activity. Deacetylated by SIRT2 at Lys-403; deacetylation stimulates its enzyme activity.

It is found in the cytoplasm. It localises to the cytosol. Its subcellular location is the membrane. It catalyses the reaction D-glucose 6-phosphate + NADP(+) = 6-phospho-D-glucono-1,5-lactone + NADPH + H(+). It functions in the pathway carbohydrate degradation; pentose phosphate pathway; D-ribulose 5-phosphate from D-glucose 6-phosphate (oxidative stage): step 1/3. Its function is as follows. Cytosolic glucose-6-phosphate dehydrogenase that catalyzes the first and rate-limiting step of the oxidative branch within the pentose phosphate pathway/shunt, an alternative route to glycolysis for the dissimilation of carbohydrates and a major source of reducing power and metabolic intermediates for fatty acid and nucleic acid biosynthetic processes. The sequence is that of Glucose-6-phosphate 1-dehydrogenase (G6PD) from Cricetulus griseus (Chinese hamster).